Reading from the N-terminus, the 209-residue chain is Uracil phosphoribosyltransferase (209 aa).

5-phospho-alpha-D-ribose 1-diphosphate is bound by residues Arg79, Arg104, and 131-139 (DPMLATGGS). Uracil is bound by residues Ile194 and 199–201 (GDA). Residue Asp200 coordinates 5-phospho-alpha-D-ribose 1-diphosphate.

The protein belongs to the UPRTase family. The cofactor is Mg(2+).

The enzyme catalyses UMP + diphosphate = 5-phospho-alpha-D-ribose 1-diphosphate + uracil. The protein operates within pyrimidine metabolism; UMP biosynthesis via salvage pathway; UMP from uracil: step 1/1. Its activity is regulated as follows. Allosterically activated by GTP. Its function is as follows. Catalyzes the conversion of uracil and 5-phospho-alpha-D-ribose 1-diphosphate (PRPP) to UMP and diphosphate. The sequence is that of Uracil phosphoribosyltransferase from Levilactobacillus brevis (strain ATCC 367 / BCRC 12310 / CIP 105137 / JCM 1170 / LMG 11437 / NCIMB 947 / NCTC 947) (Lactobacillus brevis).